The chain runs to 294 residues: Syntaxin-19 (294 aa).

Positions 209-271 (LSEIEQRHKE…NNTKEKFGLA (63 aa)) constitute a t-SNARE coiled-coil homology domain.

It belongs to the syntaxin family. In terms of assembly, interacts with EGFR.

The protein localises to the cell membrane. It localises to the cytoplasm. Plays a role in endosomal trafficking of the epidermal growth factor receptor (EGFR). This Homo sapiens (Human) protein is Syntaxin-19 (STX19).